We begin with the raw amino-acid sequence, 265 residues long: Tryptophan synthase alpha chain (265 aa).

Active-site proton acceptor residues include E41 and D52.

The protein belongs to the TrpA family. As to quaternary structure, tetramer of two alpha and two beta chains.

It carries out the reaction (1S,2R)-1-C-(indol-3-yl)glycerol 3-phosphate + L-serine = D-glyceraldehyde 3-phosphate + L-tryptophan + H2O. It participates in amino-acid biosynthesis; L-tryptophan biosynthesis; L-tryptophan from chorismate: step 5/5. Its function is as follows. The alpha subunit is responsible for the aldol cleavage of indoleglycerol phosphate to indole and glyceraldehyde 3-phosphate. The protein is Tryptophan synthase alpha chain of Bacillus velezensis (strain DSM 23117 / BGSC 10A6 / LMG 26770 / FZB42) (Bacillus amyloliquefaciens subsp. plantarum).